A 75-amino-acid polypeptide reads, in one-letter code: Pro-glucagon (75 aa).

The protein belongs to the glucagon family.

The protein resides in the secreted. In terms of biological role, plays a key role in glucose metabolism and homeostasis. Regulates blood glucose by increasing gluconeogenesis and decreasing glycolysis. This chain is Pro-glucagon (gcg), found in Amia calva (Bowfin).